The primary structure comprises 201 residues: NADH-quinone oxidoreductase subunit C (201 aa).

It belongs to the complex I 30 kDa subunit family. NDH-1 is composed of 14 different subunits. Subunits NuoB, C, D, E, F, and G constitute the peripheral sector of the complex.

Its subcellular location is the cell inner membrane. The enzyme catalyses a quinone + NADH + 5 H(+)(in) = a quinol + NAD(+) + 4 H(+)(out). NDH-1 shuttles electrons from NADH, via FMN and iron-sulfur (Fe-S) centers, to quinones in the respiratory chain. The immediate electron acceptor for the enzyme in this species is believed to be ubiquinone. Couples the redox reaction to proton translocation (for every two electrons transferred, four hydrogen ions are translocated across the cytoplasmic membrane), and thus conserves the redox energy in a proton gradient. In Azoarcus sp. (strain BH72), this protein is NADH-quinone oxidoreductase subunit C.